The sequence spans 61 residues: Double gene block protein 2 (61 aa).

Residues 1 to 12 lie on the Cytoplasmic side of the membrane; the sequence is MACCRCDSSPGD. Residues 13-33 form a helical; Signal-anchor for type II membrane protein membrane-spanning segment; sequence YSGALLILFISFVFFYITSLS. Residues 34–61 lie on the Lumenal side of the membrane; sequence PQGNTYVHHFDSSSVKTQYVGISTNGDG.

Belongs to the gammacarmovirus double gene block protein 2 family.

The protein resides in the host endoplasmic reticulum membrane. Functionally, cell-to-cell movement function. This is Double gene block protein 2 from Melon necrotic spot virus (MNSV).